Reading from the N-terminus, the 554-residue chain is Solute carrier family 22 member 1 (554 aa).

Residues 1–24 (MPSVDDVLEQVGEFGWFQKQAFLN) lie on the Cytoplasmic side of the membrane. The chain crosses the membrane as a helical span at residues 25-45 (LCLTSVAFAPIYVGIVFLGFT). Over 46 to 234 (PDHRCRSPGV…EFVGLGYRKT (189 aa)) the chain is Extracellular. Residue N71 is glycosylated (N-linked (GlcNAc...) asparagine). Residues 235–255 (VAILYQTAFSVGLVLLSGLAY) form a helical membrane-spanning segment. Over 256–261 (AVPHWR) the chain is Cytoplasmic. The chain crosses the membrane as a helical span at residues 262–282 (SLQLAVSLPIFLLLLCYWFVP). The Proline-rich sequence signature appears at 282–286 (PESPR). The Extracellular portion of the chain corresponds to 283-347 (ESPRWLLSQK…FRTQNLRKYT (65 aa)). Residue S333 is modified to Phosphoserine. A helical transmembrane segment spans residues 348–368 (FILMYLWFTSSVLYQGLIMHV). Over 369–376 (GATGGSLY) the chain is Cytoplasmic. A helical transmembrane segment spans residues 377 to 397 (LDFLYSALVEFPAAFVILLII). Residues 398–402 (DRFGR) lie on the Extracellular side of the membrane. The helical transmembrane segment at 403 to 423 (LYLLAGSNLLAGAACFFMIFI) threads the bilayer. Residues 424 to 431 (SHDLHWLS) are Cytoplasmic-facing. Residues 432–452 (IVAACIGRMGITIVFQMVCLV) traverse the membrane as a helical segment. Topologically, residues 453 to 464 (SAELYPTFIRNL) are extracellular. The chain crosses the membrane as a helical span at residues 465 to 485 (GVMVCSSLCDLGGVVAPFLVF). The Cytoplasmic segment spans residues 486-492 (RLTEVWR). The chain crosses the membrane as a helical span at residues 493 to 513 (GLPLVLFAALGLVAGGMSLLL). Over 514–554 (PETKGVALPETIEEVERLGRKAKPRDNMIYLQVKMPEPAGL) the chain is Extracellular.

The protein belongs to the major facilitator (TC 2.A.1) superfamily. Organic cation transporter (TC 2.A.1.19) family. Phosphorylated.

The protein localises to the basolateral cell membrane. The protein resides in the apical cell membrane. Its subcellular location is the lateral cell membrane. It localises to the basal cell membrane. It is found in the cell membrane. It catalyses the reaction 1-methylnicotinamide(out) = 1-methylnicotinamide(in). It carries out the reaction dopamine(out) = dopamine(in). The enzyme catalyses serotonin(out) = serotonin(in). The catalysed reaction is (R)-adrenaline(out) = (R)-adrenaline(in). It catalyses the reaction (R)-noradrenaline(out) = (R)-noradrenaline(in). It carries out the reaction histamine(out) = histamine(in). The enzyme catalyses guanidine(out) = guanidine(in). The catalysed reaction is choline(out) = choline(in). It catalyses the reaction acetylcholine(in) = acetylcholine(out). It carries out the reaction thiamine(in) = thiamine(out). The enzyme catalyses spermidine(in) = spermidine(out). The catalysed reaction is agmatine(out) = agmatine(in). It catalyses the reaction putrescine(out) = putrescine(in). It carries out the reaction (R)-carnitine(in) = (R)-carnitine(out). The enzyme catalyses O-isobutanoyl-(R)-carnitine(in) = O-isobutanoyl-(R)-carnitine(out). The catalysed reaction is O-acetyl-(R)-carnitine(in) = O-acetyl-(R)-carnitine(out). It catalyses the reaction O-3-hydroxybutanoyl-(R)-carnitine(in) = O-3-hydroxybutanoyl-(R)-carnitine(out). It carries out the reaction O-propanoyl-(R)-carnitine(in) = O-propanoyl-(R)-carnitine(out). The enzyme catalyses O-butanoyl-(R)-carnitine(in) = O-butanoyl-(R)-carnitine(out). The catalysed reaction is O-2-methylbutanoyl-(R)-carnitine(in) = O-2-methylbutanoyl-(R)-carnitine(out). It catalyses the reaction O-3-methylbutanoyl-(R)-carnitine(in) = O-3-methylbutanoyl-(R)-carnitine(out). It carries out the reaction O-hexanoyl-(R)-carnitine(in) = O-hexanoyl-(R)-carnitine(out). The enzyme catalyses L-histidyl-L-proline diketopiperazine(in) = L-histidyl-L-proline diketopiperazine(out). The catalysed reaction is (R)-salsolinol(in) = (R)-salsolinol(out). It catalyses the reaction prostaglandin F2alpha(out) = prostaglandin F2alpha(in). It carries out the reaction prostaglandin E2(out) = prostaglandin E2(in). Phosphorylation of the transporter leads to changes in its substrate affinity, resulting in a regulation of the transport activity. In contrast with rat ortholog, ASP uptake is inhibited by protein kinase A (PKA) and C (PKC) activation. ASP uptake is also endogenously activated by calmodulin, the calmodulin-dependent kinase II and LCK tyrosine kinase. Inhibited by cGMP, most likely through a cGMP-binding protein that interacts with OCT1. Its function is as follows. Electrogenic voltage-dependent transporter that mediates the transport of a variety of organic cations such as endogenous bioactive amines, cationic drugs and xenobiotics. Functions as a pH- and Na(+)-independent, bidirectional transporter. Cation cellular uptake or release is driven by the electrochemical potential (i.e. membrane potential and concentration gradient) and substrate selectivity. Hydrophobicity is a major requirement for recognition in polyvalent substrates and inhibitors. Primarily expressed in the basolateral membrane of hepatocytes and proximal tubules and involved in the uptake and disposition of cationic compounds from the blood by hepatic and renal clearance. Most likely functions as an uptake carrier in enterocytes contributing to the intestinal elimination of organic cations from the systemic circulation. Transports endogenous monoamines such as N-1-methylnicotinamide (NMN), guanidine, neurotransmitters dopamine, serotonin, noradrenaline, adrenaline and histamine, and quaternary ammonium compound such as choline. Also transports natural polyamines such as spermidine, agmatine and putrescine at low affinity, but relatively high turnover. Involved in the hepatic and intestinal uptake of the vitamin B1/thiamine, hence regulating hepatic lipid and energy metabolism. Contributes to the influx and efflux of fatty acid carriers carnitines and acylcarnitines across the basolateral membrane of hepatocytes, from the liver to the systemic circulation and inversely and may be involved in regulating the systemic availability of hepatic acylcarnitines. Also capable of transporting non-amine endogenous compounds such as prostaglandin E2 (PGE2) and prostaglandin F2-alpha (PGF2-alpha). May contribute to the transport of cationic compounds in testes across the blood-testis-barrier. Also mediates the uptake of xenobiotics tributylmethylammonium (TBuMA), quinidine, N-methyl-quinine (NMQ), N-methyl-quinidine (NMQD) N-(4,4-azo-n-pentyl)-quinuclidine (APQ), azidoprocainamide methoiodide (AMP), N-(4,4-azo-n-pentyl)-21-deoxyajmalinium (APDA) and 4-(4-(dimethylamino)styryl)-N-methylpyridinium (ASP). The chain is Solute carrier family 22 member 1 (SLC22A1) from Sus scrofa (Pig).